The primary structure comprises 89 residues: Small ribosomal subunit protein uS15 (89 aa).

Residues 1-21 are compositionally biased toward basic and acidic residues; sequence MSITPERKQEMIKDYATKEGD. A disordered region spans residues 1 to 23; it reads MSITPERKQEMIKDYATKEGDTG.

It belongs to the universal ribosomal protein uS15 family. In terms of assembly, part of the 30S ribosomal subunit. Forms a bridge to the 50S subunit in the 70S ribosome, contacting the 23S rRNA.

Its function is as follows. One of the primary rRNA binding proteins, it binds directly to 16S rRNA where it helps nucleate assembly of the platform of the 30S subunit by binding and bridging several RNA helices of the 16S rRNA. Forms an intersubunit bridge (bridge B4) with the 23S rRNA of the 50S subunit in the ribosome. The sequence is that of Small ribosomal subunit protein uS15 from Rhodospirillum rubrum (strain ATCC 11170 / ATH 1.1.1 / DSM 467 / LMG 4362 / NCIMB 8255 / S1).